The primary structure comprises 554 residues: Putative mediator of RNA polymerase II transcription subunit 29 (554 aa).

Disordered stretches follow at residues 118–301, 330–381, 398–428, and 483–524; these read DNKA…NTEA, QQQQ…PLPQ, LENQSISGNNNNNNDGQTISPQQQQEQLQLQ, and NTNL…DDNT. Positions 122–210 are enriched in low complexity; it reads NTNNNNNNNN…NNSINNNSNN (89 aa). Residues 167 to 194 adopt a coiled-coil conformation; that stretch reads NNNNNNNYNNNNNNNNNNNNNNNNNNNN. Polar residues predominate over residues 211–225; the sequence is KVGSNDNPSTAPITE. Residues 226–264 are compositionally biased toward low complexity; the sequence is NNTENNAGNTNNTNNNNNNNNNNNNNNNNNNNNNNNNTN. Polar residues predominate over residues 265–300; sequence QVAESSNISSNTTPPETTNIVNDPNSVSGGNLTNTE. Composition is skewed to low complexity over residues 330 to 374, 419 to 428, and 483 to 517; these read QQQQ…QQPQ, QQQQEQLQLQ, and NTNLGGNTFNTGTTPPLQQQPQPQQQQQINNPEIN. Residues 419–486 are a coiled coil; the sequence is QQQQEQLQLQ…SLENQINTNL (68 aa).

The protein belongs to the Mediator complex subunit 29 family. Component of the Mediator complex.

Its subcellular location is the nucleus. Functionally, component of the Mediator complex, a coactivator involved in the regulated transcription of nearly all RNA polymerase II-dependent genes. Mediator functions as a bridge to convey information from gene-specific regulatory proteins to the basal RNA polymerase II transcription machinery. Mediator is recruited to promoters by direct interactions with regulatory proteins and serves as a scaffold for the assembly of a functional preinitiation complex with RNA polymerase II and the general transcription factors. This Dictyostelium discoideum (Social amoeba) protein is Putative mediator of RNA polymerase II transcription subunit 29 (med29).